We begin with the raw amino-acid sequence, 1620 residues long: NAD-specific glutamate dehydrogenase (1620 aa).

Residue lysine 851 is part of the active site.

The protein belongs to the Glu/Leu/Phe/Val dehydrogenases family. In terms of assembly, homotetramer. Post-translationally, contains disulfide bonds (interchain).

The enzyme catalyses L-glutamate + NAD(+) + H2O = 2-oxoglutarate + NH4(+) + NADH + H(+). Activity subject to allosteric control by arginine and citrate, which function as positive and negative effectors, respectively. Involved in arginine catabolism by converting L-glutamate, into 2-oxoglutarate, which is then channeled into the tricarboxylic acid cycle. Can also utilize other amino acids of the glutamate family. This chain is NAD-specific glutamate dehydrogenase (gdhB), found in Pseudomonas aeruginosa (strain ATCC 15692 / DSM 22644 / CIP 104116 / JCM 14847 / LMG 12228 / 1C / PRS 101 / PAO1).